The sequence spans 245 residues: Ribonuclease PH (245 aa).

Phosphate is bound by residues Arg-86 and 124–126 (GTR).

This sequence belongs to the RNase PH family. In terms of assembly, homohexameric ring arranged as a trimer of dimers.

The enzyme catalyses tRNA(n+1) + phosphate = tRNA(n) + a ribonucleoside 5'-diphosphate. Its function is as follows. Phosphorolytic 3'-5' exoribonuclease that plays an important role in tRNA 3'-end maturation. Removes nucleotide residues following the 3'-CCA terminus of tRNAs; can also add nucleotides to the ends of RNA molecules by using nucleoside diphosphates as substrates, but this may not be physiologically important. Probably plays a role in initiation of 16S rRNA degradation (leading to ribosome degradation) during starvation. The sequence is that of Ribonuclease PH from Bacillus anthracis (strain A0248).